We begin with the raw amino-acid sequence, 516 residues long: Cytochrome P450 1A2 (516 aa).

S69 carries O-linked (GlcNAc) serine glycosylation. F226 provides a ligand contact to substrate. Residue C458 coordinates heme.

Belongs to the cytochrome P450 family. In terms of assembly, interacts with PGRMC1; the interaction requires PGRMC1 homodimerization. Heme is required as a cofactor.

The protein localises to the endoplasmic reticulum membrane. The protein resides in the microsome membrane. The enzyme catalyses an organic molecule + reduced [NADPH--hemoprotein reductase] + O2 = an alcohol + oxidized [NADPH--hemoprotein reductase] + H2O + H(+). It catalyses the reaction 17beta-estradiol + reduced [NADPH--hemoprotein reductase] + O2 = 2-hydroxy-17beta-estradiol + oxidized [NADPH--hemoprotein reductase] + H2O + H(+). The catalysed reaction is 17beta-estradiol + reduced [NADPH--hemoprotein reductase] + O2 = 4-hydroxy-17beta-estradiol + oxidized [NADPH--hemoprotein reductase] + H2O + H(+). It carries out the reaction estrone + reduced [NADPH--hemoprotein reductase] + O2 = 2-hydroxyestrone + oxidized [NADPH--hemoprotein reductase] + H2O + H(+). The enzyme catalyses estrone + reduced [NADPH--hemoprotein reductase] + O2 = 4-hydroxyestrone + oxidized [NADPH--hemoprotein reductase] + H2O + H(+). It catalyses the reaction cholesterol + reduced [NADPH--hemoprotein reductase] + O2 = 25-hydroxycholesterol + oxidized [NADPH--hemoprotein reductase] + H2O + H(+). The catalysed reaction is all-trans-retinol + reduced [NADPH--hemoprotein reductase] + O2 = all-trans-retinal + oxidized [NADPH--hemoprotein reductase] + 2 H2O + H(+). It carries out the reaction all-trans-retinal + reduced [NADPH--hemoprotein reductase] + O2 = all-trans-retinoate + oxidized [NADPH--hemoprotein reductase] + H2O + 2 H(+). The enzyme catalyses (5Z,8Z,11Z,14Z)-eicosatetraenoate + reduced [NADPH--hemoprotein reductase] + O2 = (14R,15S)-epoxy-(5Z,8Z,11Z)-eicosatrienoate + oxidized [NADPH--hemoprotein reductase] + H2O + H(+). It catalyses the reaction (5Z,8Z,11Z,14Z)-eicosatetraenoate + reduced [NADPH--hemoprotein reductase] + O2 = (14S,15R)-epoxy-(5Z,8Z,11Z)-eicosatrienoate + oxidized [NADPH--hemoprotein reductase] + H2O + H(+). The catalysed reaction is (5Z,8Z,11Z,14Z,17Z)-eicosapentaenoate + reduced [NADPH--hemoprotein reductase] + O2 = (17R,18S)-epoxy-(5Z,8Z,11Z,14Z)-eicosatetraenoate + oxidized [NADPH--hemoprotein reductase] + H2O + H(+). It carries out the reaction (4Z,7Z,10Z,13Z,16Z,19Z)-docosahexaenoate + reduced [NADPH--hemoprotein reductase] + O2 = (19R,20S)-epoxy-(4Z,7Z,10Z,13Z,16Z)-docosapentaenoate + oxidized [NADPH--hemoprotein reductase] + H2O + H(+). The enzyme catalyses (5S)-hydroperoxy-(6E,8Z,11Z,14Z)-eicosatetraenoate = 5-oxo-(6E,8Z,11Z,14Z)-eicosatetraenoate + H2O. It catalyses the reaction (12S)-hydroperoxy-(5Z,8Z,10E,14Z)-eicosatetraenoate = 12-oxo-(5Z,8Z,10E,14Z)-eicosatetraenoate + H2O. The catalysed reaction is (15S)-hydroperoxy-(5Z,8Z,11Z,13E)-eicosatetraenoate = 15-oxo-(5Z,8Z,11Z,13E)-eicosatetraenoate + H2O. It carries out the reaction (13S)-hydroperoxy-(9Z,11E)-octadecadienoate = 13-oxo-(9Z,11E)-octadecadienoate + H2O. The enzyme catalyses (5Z,8Z,11Z,14Z)-eicosatetraenoate + reduced [NADPH--hemoprotein reductase] + O2 = 13-hydroxy-(5Z,8Z,11Z,14Z)-eicosatetraenoate + oxidized [NADPH--hemoprotein reductase] + H2O + H(+). It catalyses the reaction (5Z,8Z,11Z,14Z)-eicosatetraenoate + reduced [NADPH--hemoprotein reductase] + O2 = 19-hydroxy-(5Z,8Z,11Z,14Z)-eicosatetraenoate + oxidized [NADPH--hemoprotein reductase] + H2O + H(+). The catalysed reaction is (9Z,12Z)-octadecadienoate + reduced [NADPH--hemoprotein reductase] + O2 = 11-hydroxy-(9Z,12Z)-octadecadienoate + oxidized [NADPH--hemoprotein reductase] + H2O + H(+). Its pathway is cofactor metabolism; retinol metabolism. The protein operates within steroid metabolism; cholesterol metabolism. It functions in the pathway lipid metabolism; arachidonate metabolism. A cytochrome P450 monooxygenase involved in the metabolism of various endogenous substrates, including fatty acids, steroid hormones and vitamins. Mechanistically, uses molecular oxygen inserting one oxygen atom into a substrate, and reducing the second into a water molecule, with two electrons provided by NADPH via cytochrome P450 reductase (NADPH--hemoprotein reductase). Catalyzes the hydroxylation of carbon-hydrogen bonds. Exhibits high catalytic activity for the formation of hydroxyestrogens from estrone (E1) and 17beta-estradiol (E2), namely 2-hydroxy E1 and E2. Metabolizes cholesterol toward 25-hydroxycholesterol, a physiological regulator of cellular cholesterol homeostasis. May act as a major enzyme for all-trans retinoic acid biosynthesis in the liver. Catalyzes two successive oxidative transformation of all-trans retinol to all-trans retinal and then to the active form all-trans retinoic acid. Primarily catalyzes stereoselective epoxidation of the last double bond of polyunsaturated fatty acids (PUFA), displaying a strong preference for the (R,S) stereoisomer. Catalyzes bisallylic hydroxylation and omega-1 hydroxylation of PUFA. May also participate in eicosanoids metabolism by converting hydroperoxide species into oxo metabolites (lipoxygenase-like reaction, NADPH-independent). Plays a role in the oxidative metabolism of xenobiotics. Catalyzes the N-hydroxylation of heterocyclic amines and the O-deethylation of phenacetin. Metabolizes caffeine via N3-demethylation. The protein is Cytochrome P450 1A2 (CYP1A2) of Callithrix jacchus (White-tufted-ear marmoset).